The following is a 374-amino-acid chain: Resuscitation-promoting factor Rpf2 (374 aa).

Positions 1–40 (MAPHQKSRINRINSTRSVPLRLATGGVLATLLIGGVTAAA) are cleaved as a signal peptide. In terms of domain architecture, G5 spans 210–290 (IDRVDNTEIT…PATISRGTKT (81 aa)). The disordered stretch occupies residues 228–252 (PTYVDDPEAPAGDETVVEEGAPGTK).

The protein belongs to the transglycosylase family. Rpf subfamily. Post-translationally, glycosylated; by Pmt, by at least mannose and galactose. Other unidentified sugars may also be present. May be subject to proteolytic cleavage as multiple shorter forms are detected in gels. In terms of processing, at least 3 non-glycosylated protein isoforms of 35, 40 and 42 kDa are seen in gels.

The protein resides in the secreted. Its subcellular location is the cell surface. Factor that stimulates resuscitation of dormant cells. Has peptidoglycan (PG) hydrolytic activity. Active in the pM concentration range. Has little to no effect on actively-growing cells. PG fragments could either directly activate the resuscitation pathway of dormant bacteria or serve as a substrate for endogenous Rpf, resulting in low molecular weight products with resuscitation activity. The protein is Resuscitation-promoting factor Rpf2 (rpf2) of Corynebacterium glutamicum (strain ATCC 13032 / DSM 20300 / JCM 1318 / BCRC 11384 / CCUG 27702 / LMG 3730 / NBRC 12168 / NCIMB 10025 / NRRL B-2784 / 534).